We begin with the raw amino-acid sequence, 472 residues long: MTQETALLSTSPEGGDLNVPARKVFVKTYGCQMNVYDSDRMSDALSRDGYVATDVLEDADFVLLNTCHIREKAAEKVYSELGRLRELKKAKALEGREMLIGVAGCVAQAEGDEILRRVPAVDLVIGPQTYHRLPDALKRARAGQRIVETEYAIEDKFVHLPAPDKAKTRARGVTAFLTVQEGCDKFCTFCVVPYTRGSEVSRPVAQIVAEAEKLVEGGVREITLLGQNVNAWHGEGPHGREWSLGDLLRRLGEIDGLARLRYTTSHPRDMDDSLIEAHRSMAKLMPYLHLPVQSGSDRILKAMNRRHTAAEYLALVERIRAAQPDLALSGDFIVGFPGETDQDFEDTLRLVEEVNYAQAFSFKYSTRPGTPGAELKEQVPEDVKAKRLEILQALLVKQQRGFAEACVGREIDLLLEKPGRMPGQLVGRSPWLQPVNVDAKASQIGDIIRVRITKAGPNSLFAEMIGESDARS.

The MTTase N-terminal domain maps to 22–142 (RKVFVKTYGC…LPDALKRARA (121 aa)). Residues C31, C67, C105, C183, C187, and C190 each contribute to the [4Fe-4S] cluster site. Residues 169–403 (RARGVTAFLT…LLVKQQRGFA (235 aa)) form the Radical SAM core domain. A TRAM domain is found at 404-466 (EACVGREIDL…PNSLFAEMIG (63 aa)).

This sequence belongs to the methylthiotransferase family. MiaB subfamily. Monomer. Requires [4Fe-4S] cluster as cofactor.

It is found in the cytoplasm. It carries out the reaction N(6)-dimethylallyladenosine(37) in tRNA + (sulfur carrier)-SH + AH2 + 2 S-adenosyl-L-methionine = 2-methylsulfanyl-N(6)-dimethylallyladenosine(37) in tRNA + (sulfur carrier)-H + 5'-deoxyadenosine + L-methionine + A + S-adenosyl-L-homocysteine + 2 H(+). Catalyzes the methylthiolation of N6-(dimethylallyl)adenosine (i(6)A), leading to the formation of 2-methylthio-N6-(dimethylallyl)adenosine (ms(2)i(6)A) at position 37 in tRNAs that read codons beginning with uridine. The polypeptide is tRNA-2-methylthio-N(6)-dimethylallyladenosine synthase (Rhizobium meliloti (strain 1021) (Ensifer meliloti)).